Reading from the N-terminus, the 662-residue chain is Aprataxin-like protein (662 aa).

The HIT domain maps to Ser-4–Leu-108. A C2H2-type zinc finger spans residues Leu-381–His-403. Residues Lys-482 to Ser-662 form a disordered region. Over residues Asn-490–Pro-500 the composition is skewed to low complexity. 2 stretches are compositionally biased toward polar residues: residues Phe-501–Lys-513 and Gly-560–Ser-569. Residues Val-570–Gln-582 are compositionally biased toward gly residues. Over residues Trp-588–Arg-599 the composition is skewed to polar residues. Residues Gln-600–Gln-626 show a composition bias toward low complexity. The segment covering Pro-653 to Ser-662 has biased composition (pro residues).

It localises to the nucleus. Functionally, DNA-binding protein involved in single-strand DNA break repair, double-strand DNA break repair and base excision repair. Resolves abortive DNA ligation intermediates formed either at base excision sites, or when DNA ligases attempt to repair non-ligatable breaks induced by reactive oxygen species. Catalyzes the release of adenylate groups covalently linked to 5'-phosphate termini, resulting in the production of 5'-phosphate termini that can be efficiently rejoined. This Drosophila melanogaster (Fruit fly) protein is Aprataxin-like protein.